Consider the following 338-residue polypeptide: MKTDDFDYKLPEELIASYPLENRDASRLLKLNKQTGEIADYKFTDFIDFINPGDLLVFNNSKVMLARLYGSKTTGAKLEYLIERIKNPKLFETHIKANRSPAIGSEIYVESTHAKVLDKDGGMYLLEIQGDKDIYQLMEEFGHIPLPPYMKRDDEEFDAERYQTVYAQDLGSVAAPTAGLHFSKELMQQIKDKGVDIAYITLHVGSGTFKPVQVDDVESHKMHAEVISVPVEVCQKIRQTKENGGRVIAIGTTSVRSLETAGQNGQIEPYQGETDIFLYPGKKFNVVDAMITNFHLPKSTLIMLVSAFADKEKIIKAYEHAIAERYRFFSYGDAMFIF.

This sequence belongs to the QueA family. In terms of assembly, monomer.

It is found in the cytoplasm. It catalyses the reaction 7-aminomethyl-7-carbaguanosine(34) in tRNA + S-adenosyl-L-methionine = epoxyqueuosine(34) in tRNA + adenine + L-methionine + 2 H(+). Its pathway is tRNA modification; tRNA-queuosine biosynthesis. In terms of biological role, transfers and isomerizes the ribose moiety from AdoMet to the 7-aminomethyl group of 7-deazaguanine (preQ1-tRNA) to give epoxyqueuosine (oQ-tRNA). The sequence is that of S-adenosylmethionine:tRNA ribosyltransferase-isomerase from Francisella tularensis subsp. mediasiatica (strain FSC147).